We begin with the raw amino-acid sequence, 260 residues long: tRNA (guanine-N(1)-)-methyltransferase (260 aa).

Residues Gly117 and 137–142 (LGDFVL) each bind S-adenosyl-L-methionine.

It belongs to the RNA methyltransferase TrmD family. Homodimer.

Its subcellular location is the cytoplasm. It carries out the reaction guanosine(37) in tRNA + S-adenosyl-L-methionine = N(1)-methylguanosine(37) in tRNA + S-adenosyl-L-homocysteine + H(+). In terms of biological role, specifically methylates guanosine-37 in various tRNAs. The polypeptide is tRNA (guanine-N(1)-)-methyltransferase (Cupriavidus metallidurans (strain ATCC 43123 / DSM 2839 / NBRC 102507 / CH34) (Ralstonia metallidurans)).